The primary structure comprises 274 residues: Ribose-5-phosphate isomerase (274 aa).

The protein belongs to the ribose 5-phosphate isomerase family.

The protein resides in the cytoplasm. It catalyses the reaction aldehydo-D-ribose 5-phosphate = D-ribulose 5-phosphate. The protein operates within carbohydrate degradation; pentose phosphate pathway; D-ribose 5-phosphate from D-ribulose 5-phosphate (non-oxidative stage): step 1/1. This is Ribose-5-phosphate isomerase (RKI1) from Kluyveromyces lactis (strain ATCC 8585 / CBS 2359 / DSM 70799 / NBRC 1267 / NRRL Y-1140 / WM37) (Yeast).